We begin with the raw amino-acid sequence, 543 residues long: Cytochrome P450 monooxygenase 205 (543 aa).

The helical transmembrane segment at 9 to 29 (LISLGVAALAVAVWKAIVMVI) threads the bilayer. Asparagine 332 and asparagine 434 each carry an N-linked (GlcNAc...) asparagine glycan. Cysteine 479 is a binding site for heme.

The protein belongs to the cytochrome P450 family. Requires heme as cofactor.

It is found in the membrane. Its pathway is secondary metabolite biosynthesis. Cytochrome P450 monooxygenase that is able to use carbazole and phenanthrene as substrates for oxidation. The protein is Cytochrome P450 monooxygenase 205 of Postia placenta (strain ATCC 44394 / Madison 698-R) (Brown rot fungus).